Reading from the N-terminus, the 1214-residue chain is Ubiquitin carboxyl-terminal hydrolase 36 (1214 aa).

The disordered stretch occupies residues 124–169 (AVGSNGHDNNTVNGGTVNGNRKQTVDSGQSNQNSSANPNELPKPKR). The segment covering 132–143 (NNTVNGGTVNGN) has biased composition (low complexity). The segment covering 144-161 (RKQTVDSGQSNQNSSANP) has biased composition (polar residues). In terms of domain architecture, USP spans 192–502 (AGMLNVGNTC…NAYIMFYELD (311 aa)). Cys201 functions as the Nucleophile in the catalytic mechanism. His461 functions as the Proton acceptor in the catalytic mechanism. The segment covering 509–523 (SSTINNNSSSSSNNS) has biased composition (low complexity). Residues 509 to 532 (SSTINNNSSSSSNNSVAPKLNGLR) form a disordered region. Residues Ser553 and Ser555 each carry the phosphoserine modification. Disordered stretches follow at residues 631–819 (GEAA…KQKT), 836–964 (HRIA…ASKS), 977–1001 (QKLLNGSAKSAATTRPGNGYQSESV), 1048–1161 (HGDT…PNFQ), and 1176–1214 (KFQQQRALQRHLAAGGGFTRRQQQSTGQQQQQQQQQQQS). Positions 633–651 (AAPNANTNANANKSSCNNN) are enriched in low complexity. Acidic residues predominate over residues 666-685 (SDEDEDEDDSDDDDDDDDDD). Residue Thr717 is modified to Phosphothreonine. 2 positions are modified to phosphoserine: Ser727 and Ser729. Low complexity-rich tracts occupy residues 735-751 (QQQQQQQQQLLQTPQQL) and 785-816 (KTNGSVSNTSNSSHSKAKSASNASSANVNSSK). Positions 856–868 (EQVQTEQGTKKLN) are enriched in polar residues. Low complexity predominate over residues 869–878 (SASSASASKS). A Phosphoserine modification is found at Ser891. Residue Thr894 is modified to Phosphothreonine. Ser897 carries the phosphoserine modification. Over residues 915–942 (DDDDEEDEEEDDVEADADQEDDDDEVVV) the composition is skewed to acidic residues. Residue Thr951 is modified to Phosphothreonine. Over residues 983 to 1001 (SAKSAATTRPGNGYQSESV) the composition is skewed to polar residues. Over residues 1058 to 1076 (NSSSNNSSNINSNSNSNSN) the composition is skewed to low complexity. Positions 1089-1098 (EAREQRKRDA) are enriched in basic and acidic residues. 2 stretches are compositionally biased toward low complexity: residues 1178–1188 (QQQRALQRHLA) and 1197–1214 (QQQSTGQQQQQQQQQQQS).

It belongs to the peptidase C19 family. As to quaternary structure, interacts with atms/PAF1, but not with CycT.

It is found in the nucleus. The protein localises to the nucleolus. It catalyses the reaction Thiol-dependent hydrolysis of ester, thioester, amide, peptide and isopeptide bonds formed by the C-terminal Gly of ubiquitin (a 76-residue protein attached to proteins as an intracellular targeting signal).. In terms of biological role, required for maintaining multiple types of adult stem cells, including male and female germline, epithelial follicle cell and intestinal stem cells. May function as a transcriptional repressor by continually deubiquiting histone H2B at the promoters of genes critical for cellular differentiation, thereby preventing histone H3 'Lys-4' trimethylation (H3K4). Controls selective autophagy activation by ubiquitinated proteins. This is Ubiquitin carboxyl-terminal hydrolase 36 (Usp36) from Drosophila virilis (Fruit fly).